The following is a 384-amino-acid chain: Nodal homolog 2-B (384 aa).

The N-terminal stretch at 1–18 (MASLGAILLFAIASLMHG) is a signal peptide. Positions 19 to 283 (RPIHSDRKGA…RVADARRHRR (265 aa)) are excised as a propeptide. Residues N71, N173, and N344 are each glycosylated (N-linked (GlcNAc...) asparagine). Cysteines 306 and 372 form a disulfide.

The protein belongs to the TGF-beta family. In terms of assembly, homodimer; disulfide-linked. Forms heterodimers with the TGF-beta family member derriere. Interacts with tsku; enhances nodal2 activity.

It localises to the secreted. Its function is as follows. Cooperation and regulatory loops of multiple nodals are essential for mesendoderm patterning in early embryos. Essential for mesoderm formation and axial patterning during embryonic development. Activates the activin-like signaling pathway to induce dorsal and ventral mesoderm in animal cap ectoderm. In addition, also dorsalizes ventral marginal zone (VMZ) tissues during gastrulation. Induces muscle actin. Appears to act as both a short-range and long-range morphogen. The unprocessed protein inhibits bmp- and wnt-signaling. This is Nodal homolog 2-B (nodal2-b) from Xenopus laevis (African clawed frog).